A 71-amino-acid chain; its full sequence is Translation initiation factor IF-1 (71 aa).

The S1-like domain occupies 1–71; the sequence is MAKQSAIEQD…LSKARITYRY (71 aa).

The protein belongs to the IF-1 family. As to quaternary structure, component of the 30S ribosomal translation pre-initiation complex which assembles on the 30S ribosome in the order IF-2 and IF-3, IF-1 and N-formylmethionyl-tRNA(fMet); mRNA recruitment can occur at any time during PIC assembly.

It localises to the cytoplasm. Its function is as follows. One of the essential components for the initiation of protein synthesis. Stabilizes the binding of IF-2 and IF-3 on the 30S subunit to which N-formylmethionyl-tRNA(fMet) subsequently binds. Helps modulate mRNA selection, yielding the 30S pre-initiation complex (PIC). Upon addition of the 50S ribosomal subunit IF-1, IF-2 and IF-3 are released leaving the mature 70S translation initiation complex. The polypeptide is Translation initiation factor IF-1 (Flavobacterium johnsoniae (strain ATCC 17061 / DSM 2064 / JCM 8514 / BCRC 14874 / CCUG 350202 / NBRC 14942 / NCIMB 11054 / UW101) (Cytophaga johnsonae)).